We begin with the raw amino-acid sequence, 476 residues long: Cytoplasmic 60S subunit biogenesis factor ZNF622 (476 aa).

N-acetylalanine is present on Ala-2. U1-type zinc fingers lie at residues 4–28 and 69–93; these read LTCI…TDWH and TYCT…SRRH. Residues 137 to 243 form a disordered region; it reads AIKAQPSTSP…AEDAAAEESP (107 aa). Residues 167–177 show a composition bias toward basic and acidic residues; that stretch reads VPERDPTEKPP. A compositionally biased stretch (acidic residues) spans 195-239; it reads EDGEEEGEEEEEDDEDEDWEDIDSDDGLECEDPGVEDQDAEDAAA. Phosphoserine is present on Ser-275.

This sequence belongs to the REI1 family. In terms of assembly, homo- and heterodimer. Associates with pre-60S ribosomal particles. Interacts with MELK and MYBL2. Interacts with DNAJC21. Phosphorylated by MELK. The phosphorylation may redirect the protein to the nucleus. Post-translationally, ubiquitinated by HECTD1, leading to its degradation.

Its subcellular location is the cytoplasm. It is found in the nucleus. Functionally, pre-60S-associated cytoplasmic factor involved in the cytoplasmic maturation of the 60S subunit. The sequence is that of Cytoplasmic 60S subunit biogenesis factor ZNF622 (Znf622) from Mus musculus (Mouse).